The following is a 548-amino-acid chain: Probable delta-1-pyrroline-5-carboxylate dehydrogenase (548 aa).

The active-site Proton acceptor is glutamate 298. Cysteine 332 serves as the catalytic Nucleophile. 3 positions are modified to phosphoserine: serine 391, serine 394, and serine 396.

The protein belongs to the aldehyde dehydrogenase family.

The catalysed reaction is L-glutamate 5-semialdehyde + NAD(+) + H2O = L-glutamate + NADH + 2 H(+). The protein operates within amino-acid degradation; L-proline degradation into L-glutamate; L-glutamate from L-proline: step 2/2. In Schizosaccharomyces pombe (strain 972 / ATCC 24843) (Fission yeast), this protein is Probable delta-1-pyrroline-5-carboxylate dehydrogenase.